The chain runs to 307 residues: Oxygen-dependent coproporphyrinogen-III oxidase (307 aa).

Substrate is bound at residue Ser-99. Residues His-103 and His-113 each contribute to the a divalent metal cation site. His-113 (proton donor) is an active-site residue. Residue 115-117 (NVR) coordinates substrate. The a divalent metal cation site is built by His-152 and His-182. The important for dimerization stretch occupies residues 247–282 (YVEFNLVFDRGTLFGLQSGGRTESILMSMPPVANWR). Residue 265–267 (GGR) coordinates substrate.

Belongs to the aerobic coproporphyrinogen-III oxidase family. Homodimer. Requires a divalent metal cation as cofactor.

Its subcellular location is the cytoplasm. The catalysed reaction is coproporphyrinogen III + O2 + 2 H(+) = protoporphyrinogen IX + 2 CO2 + 2 H2O. It functions in the pathway porphyrin-containing compound metabolism; protoporphyrin-IX biosynthesis; protoporphyrinogen-IX from coproporphyrinogen-III (O2 route): step 1/1. Involved in the heme biosynthesis. Catalyzes the aerobic oxidative decarboxylation of propionate groups of rings A and B of coproporphyrinogen-III to yield the vinyl groups in protoporphyrinogen-IX. This Burkholderia cenocepacia (strain ATCC BAA-245 / DSM 16553 / LMG 16656 / NCTC 13227 / J2315 / CF5610) (Burkholderia cepacia (strain J2315)) protein is Oxygen-dependent coproporphyrinogen-III oxidase.